We begin with the raw amino-acid sequence, 132 residues long: Ribonuclease P protein component (132 aa).

The protein belongs to the RnpA family. As to quaternary structure, consists of a catalytic RNA component (M1 or rnpB) and a protein subunit.

The catalysed reaction is Endonucleolytic cleavage of RNA, removing 5'-extranucleotides from tRNA precursor.. Functionally, RNaseP catalyzes the removal of the 5'-leader sequence from pre-tRNA to produce the mature 5'-terminus. It can also cleave other RNA substrates such as 4.5S RNA. The protein component plays an auxiliary but essential role in vivo by binding to the 5'-leader sequence and broadening the substrate specificity of the ribozyme. This is Ribonuclease P protein component from Marinomonas sp. (strain MWYL1).